A 241-amino-acid chain; its full sequence is Protein unc-119 homolog B-B (241 aa).

The disordered stretch occupies residues 1 to 46 (MSGSNREAALAGQPKDERKKSGGGVINRLKARRVQGKESGTSDQSS). Y132 serves as a coordination point for tetradecanoate.

It belongs to the PDE6D/unc-119 family.

It is found in the cell projection. Its subcellular location is the cilium. Myristoyl-binding protein that acts as a cargo adapter: specifically binds the myristoyl moiety of a subset of N-terminally myristoylated proteins and is required for their localization. Plays a key role in localization of proteins to the primary cilium membrane. The protein is Protein unc-119 homolog B-B (unc119b-b) of Xenopus laevis (African clawed frog).